A 147-amino-acid polypeptide reads, in one-letter code: MLMPKRVKYRRVHRGRMKGKALKGNTLTYGDYGIQALGSCWLTANQIEAARRAMTRYIKRGGNIWIKVFPDKPVSKKPIGIRMGSGKGAPEYWVAVIKPGRVLFEMAGVPEDVAREAMRLAQHKLPIKTKFIAREEFGEKDGEADEN.

The protein belongs to the universal ribosomal protein uL16 family. Part of the 50S ribosomal subunit.

Binds 23S rRNA and is also seen to make contacts with the A and possibly P site tRNAs. The polypeptide is Large ribosomal subunit protein uL16 (Finegoldia magna (strain ATCC 29328 / DSM 20472 / WAL 2508) (Peptostreptococcus magnus)).